The following is a 1255-amino-acid chain: Pre-mRNA-splicing factor ATP-dependent RNA helicase DEAH7 (1255 aa).

The tract at residues 1 to 316 (MGVDPFKTTE…SDEDRSQGAE (316 aa)) is disordered. Positions 13–60 (EADKETNGGVPVKDKLTFKAPERKSRLGLDARAIEKKDNAKTEGEFKV) are enriched in basic and acidic residues. Residues 109–137 (AQESTVTTENAGTSDISITPRTLSCTSSY) show a composition bias toward polar residues. 2 short sequence motifs (nuclear localization signal) span residues 144–153 (RHREEHRRDR) and 172–191 (RRRE…KRRR). A compositionally biased stretch (basic and acidic residues) spans 144–219 (RHREEHRRDR…EWERSPHGDR (76 aa)). Composition is skewed to low complexity over residues 220–240 (GSSY…AASP) and 271–290 (PIRA…GGRS). A compositionally biased stretch (basic and acidic residues) spans 297 to 316 (REGDLTNEGHSDEDRSQGAE). The region spanning 568–731 (LQVIRENQVI…FGSVPIFNIP (164 aa)) is the Helicase ATP-binding domain. 581 to 588 (GETGSGKT) serves as a coordination point for ATP. The DEAH box motif lies at 678–681 (DEAH). Positions 753 to 933 (AVKQAMTIHI…NVVLLLKSLK (181 aa)) constitute a Helicase C-terminal domain. Residues 1190-1224 (LEHKKKQKEEKSGMEEEMEKLRRDQVESELRSKER) are compositionally biased toward basic and acidic residues. The segment at 1190–1255 (LEHKKKQKEE…TFLRPKKLGL (66 aa)) is disordered.

Belongs to the DEAD box helicase family. DEAH subfamily. PRP16 sub-subfamily. In terms of assembly, interacts with the Phytophthora PSR1 protein.

The protein resides in the nucleus. The enzyme catalyses ATP + H2O = ADP + phosphate + H(+). Involved in pre-mRNA splicing by mediating structural transitions of the spliceosome during the catalytic step. Facilitates expression of genes involved in auxin-mediated development including male-gametophyte transmission, apical-basal patterning of embryonic and gynoecium development, stamen development, phyllotactic flower positioning, and vascular development. Also involved in root-meristem maintenance and planar polarity of root-hair positioning. Acts as a component of RNA silencing that regulates distinct classes of endogenous small RNAs. Functions as a positive regulator of plant immunity. This Arabidopsis thaliana (Mouse-ear cress) protein is Pre-mRNA-splicing factor ATP-dependent RNA helicase DEAH7.